A 249-amino-acid polypeptide reads, in one-letter code: uncharacterized protein (249 aa).

This is an uncharacterized protein from Caenorhabditis elegans.